Here is a 528-residue protein sequence, read N- to C-terminus: Homoserine O-acetyltransferase (528 aa).

One can recognise an AB hydrolase-1 domain in the interval 60-245 (LVICHALTGS…AALLTYRSRD (186 aa)). S154 acts as the Nucleophile in catalysis. Disordered regions lie at residues 250 to 335 (RFGR…VKTQ) and 388 to 413 (DLSA…DATE). A compositionally biased stretch (polar residues) spans 273-282 (QETTDPSVPS). Basic and acidic residues predominate over residues 295 to 304 (AWREHNDGHR). A compositionally biased stretch (low complexity) spans 389–409 (LSAPSRDTSLSSLSSGLPSSP). Residues D438 and H467 contribute to the active site.

This sequence belongs to the AB hydrolase superfamily. MetX family.

The protein resides in the cytoplasm. The catalysed reaction is L-homoserine + acetyl-CoA = O-acetyl-L-homoserine + CoA. Its pathway is amino-acid biosynthesis; L-methionine biosynthesis via de novo pathway; O-acetyl-L-homoserine from L-homoserine: step 1/1. Its activity is regulated as follows. Inhibited by 6-carbamoyl-3a,4,5,9b-tetrahydro-3H-cyclopenta[ c]quinoline-4-carboxylic acid (CTCQC). In terms of biological role, commits homoserine to the methionine biosynthesis pathway by catalyzing its O-acetylation. The polypeptide is Homoserine O-acetyltransferase (Cryptococcus neoformans var. grubii serotype A (strain H99 / ATCC 208821 / CBS 10515 / FGSC 9487) (Filobasidiella neoformans var. grubii)).